The following is a 281-amino-acid chain: Pantothenate synthetase (281 aa).

17-24 (MGFLHEGH) contributes to the ATP binding site. His24 serves as the catalytic Proton donor. Gln48 provides a ligand contact to (R)-pantoate. Gln48 is a beta-alanine binding site. Residue 134–137 (GEKD) participates in ATP binding. Position 140 (Gln140) interacts with (R)-pantoate. Residues Val163 and 176 to 179 (LSSR) each bind ATP.

It belongs to the pantothenate synthetase family. As to quaternary structure, homodimer.

It localises to the cytoplasm. It carries out the reaction (R)-pantoate + beta-alanine + ATP = (R)-pantothenate + AMP + diphosphate + H(+). It functions in the pathway cofactor biosynthesis; (R)-pantothenate biosynthesis; (R)-pantothenate from (R)-pantoate and beta-alanine: step 1/1. Its function is as follows. Catalyzes the condensation of pantoate with beta-alanine in an ATP-dependent reaction via a pantoyl-adenylate intermediate. The polypeptide is Pantothenate synthetase (Deinococcus radiodurans (strain ATCC 13939 / DSM 20539 / JCM 16871 / CCUG 27074 / LMG 4051 / NBRC 15346 / NCIMB 9279 / VKM B-1422 / R1)).